We begin with the raw amino-acid sequence, 232 residues long: 2,3,4,5-tetrahydropyridine-2,6-dicarboxylate N-acetyltransferase (232 aa).

This sequence belongs to the transferase hexapeptide repeat family. DapH subfamily.

It catalyses the reaction (S)-2,3,4,5-tetrahydrodipicolinate + acetyl-CoA + H2O = L-2-acetamido-6-oxoheptanedioate + CoA. It participates in amino-acid biosynthesis; L-lysine biosynthesis via DAP pathway; LL-2,6-diaminopimelate from (S)-tetrahydrodipicolinate (acetylase route): step 1/3. Functionally, catalyzes the transfer of an acetyl group from acetyl-CoA to tetrahydrodipicolinate. This is 2,3,4,5-tetrahydropyridine-2,6-dicarboxylate N-acetyltransferase from Streptococcus pneumoniae (strain Taiwan19F-14).